The following is a 100-amino-acid chain: Large ribosomal subunit protein uL23 (100 aa).

The protein belongs to the universal ribosomal protein uL23 family. Part of the 50S ribosomal subunit. Contacts protein L29, and trigger factor when it is bound to the ribosome.

Functionally, one of the early assembly proteins it binds 23S rRNA. One of the proteins that surrounds the polypeptide exit tunnel on the outside of the ribosome. Forms the main docking site for trigger factor binding to the ribosome. This Mycobacterium marinum (strain ATCC BAA-535 / M) protein is Large ribosomal subunit protein uL23.